Reading from the N-terminus, the 100-residue chain is Urease subunit gamma (100 aa).

It belongs to the urease gamma subunit family. As to quaternary structure, heterotrimer of UreA (gamma), UreB (beta) and UreC (alpha) subunits. Three heterotrimers associate to form the active enzyme.

The protein resides in the cytoplasm. It catalyses the reaction urea + 2 H2O + H(+) = hydrogencarbonate + 2 NH4(+). The protein operates within nitrogen metabolism; urea degradation; CO(2) and NH(3) from urea (urease route): step 1/1. The chain is Urease subunit gamma from Haemophilus influenzae (strain PittEE).